A 427-amino-acid polypeptide reads, in one-letter code: Serine--tRNA ligase (427 aa).

L-serine is bound at residue 232–234 (TAE). An ATP-binding site is contributed by 263-265 (RSE). Residue glutamate 286 participates in L-serine binding. 350 to 353 (EISS) contacts ATP. An L-serine-binding site is contributed by serine 385.

The protein belongs to the class-II aminoacyl-tRNA synthetase family. Type-1 seryl-tRNA synthetase subfamily. Homodimer. The tRNA molecule binds across the dimer.

It localises to the cytoplasm. The enzyme catalyses tRNA(Ser) + L-serine + ATP = L-seryl-tRNA(Ser) + AMP + diphosphate + H(+). The catalysed reaction is tRNA(Sec) + L-serine + ATP = L-seryl-tRNA(Sec) + AMP + diphosphate + H(+). It participates in aminoacyl-tRNA biosynthesis; selenocysteinyl-tRNA(Sec) biosynthesis; L-seryl-tRNA(Sec) from L-serine and tRNA(Sec): step 1/1. In terms of biological role, catalyzes the attachment of serine to tRNA(Ser). Is also able to aminoacylate tRNA(Sec) with serine, to form the misacylated tRNA L-seryl-tRNA(Sec), which will be further converted into selenocysteinyl-tRNA(Sec). This chain is Serine--tRNA ligase, found in Lacticaseibacillus paracasei (strain ATCC 334 / BCRC 17002 / CCUG 31169 / CIP 107868 / KCTC 3260 / NRRL B-441) (Lactobacillus paracasei).